We begin with the raw amino-acid sequence, 129 residues long: MVDKAAHILLVGVGGFLGSVARYLVALWMAPITAVFPFATLTVNLLGSFLIGFISELALSTSLISPSTRIFLVTGFCGGFTTFSSYMIEHSALLRDGEHLYAALYLFGSLIGGFIALYLGIISARWMAG.

A run of 4 helical transmembrane segments spans residues 8-28 (ILLV…VALW), 34-54 (AVFP…IGFI), 70-90 (IFLV…MIEH), and 102-122 (AALY…LGII). 2 residues coordinate Na(+): Gly-78 and Thr-81.

This sequence belongs to the fluoride channel Fluc/FEX (TC 1.A.43) family.

The protein resides in the cell inner membrane. It carries out the reaction fluoride(in) = fluoride(out). Its activity is regulated as follows. Na(+) is not transported, but it plays an essential structural role and its presence is essential for fluoride channel function. Its function is as follows. Fluoride-specific ion channel. Important for reducing fluoride concentration in the cell, thus reducing its toxicity. This Chlorobium chlorochromatii (strain CaD3) protein is Fluoride-specific ion channel FluC.